A 183-amino-acid chain; its full sequence is Capsid protein (183 aa).

Residues 136-183 (NAPILSTLPETTVVRRRGRSPRRRTPSPRRRRSQSPRRRRSQSRESQC) form a disordered region. The span at 149-176 (VRRRGRSPRRRTPSPRRRRSQSPRRRRS) shows a compositional bias: basic residues. Residues S155, S162, and S170 each carry the phosphoserine; by host modification. Residues 155-161 (SPRRRTP) form a 1; half-length repeat. The interval 155 to 177 (SPRRRTPSPRRRRSQSPRRRRSQ) is 3 X 8 AA repeats of S-P-R-R-R-[PR]-S-Q. The Bipartite nuclear localization signal signature appears at 158–175 (RRTPSPRRRRSQSPRRRR). Repeat copies occupy residues 162-169 (SPRRRRSQ) and 170-177 (SPRRRRSQ). Positions 177–183 (QSRESQC) are RNA binding.

Belongs to the orthohepadnavirus core antigen family. As to quaternary structure, homodimerizes, then multimerizes. Interacts with cytosol exposed regions of viral L glycoprotein present in the reticulum-to-Golgi compartment. Interacts with human FLNB. Phosphorylated form interacts with host importin alpha; this interaction depends on the exposure of the NLS, which itself depends upon genome maturation and/or phosphorylation of the capsid protein. Interacts with host NUP153. Post-translationally, phosphorylated by host SRPK1, SRPK2, and maybe protein kinase C or GAPDH. Phosphorylation is critical for pregenomic RNA packaging. Protein kinase C phosphorylation is stimulated by HBx protein and may play a role in transport of the viral genome to the nucleus at the late step during the viral replication cycle.

It localises to the virion. Its subcellular location is the host cytoplasm. Self assembles to form an icosahedral capsid. Most capsids appear to be large particles with an icosahedral symmetry of T=4 and consist of 240 copies of capsid protein, though a fraction forms smaller T=3 particles consisting of 180 capsid proteins. Entering capsids are transported along microtubules to the nucleus. Phosphorylation of the capsid is thought to induce exposure of nuclear localization signal in the C-terminal portion of the capsid protein that allows binding to the nuclear pore complex via the importin (karyopherin-) alpha and beta. Capsids are imported in intact form through the nuclear pore into the nuclear basket, where it probably binds NUP153. Only capsids that contain the mature viral genome can release the viral DNA and capsid protein into the nucleoplasm. Immature capsids get stuck in the basket. Capsids encapsulate the pre-genomic RNA and the P protein. Pre-genomic RNA is reverse-transcribed into DNA while the capsid is still in the cytoplasm. The capsid can then either be directed to the nucleus, providing more genomes for transcription, or bud through the endoplasmic reticulum to provide new virions. The protein is Capsid protein of Homo sapiens (Human).